Reading from the N-terminus, the 148-residue chain is UPF0260 protein Maqu_1608 (148 aa).

This sequence belongs to the UPF0260 family.

The polypeptide is UPF0260 protein Maqu_1608 (Marinobacter nauticus (strain ATCC 700491 / DSM 11845 / VT8) (Marinobacter aquaeolei)).